The chain runs to 437 residues: tRNA-2-methylthio-N(6)-dimethylallyladenosine synthase (437 aa).

Residues 1–115 (MKVYIETMGC…ISQVIHKEKA (115 aa)) enclose the MTTase N-terminal domain. Residues Cys-10, Cys-46, Cys-78, Cys-148, Cys-152, and Cys-155 each coordinate [4Fe-4S] cluster. Residues 134 to 367 (KKAQIRSLLN…QNRHKEILEE (234 aa)) form the Radical SAM core domain. The 67-residue stretch at 370 to 436 (KLEVGKTHVV…KGRLIATAKG (67 aa)) folds into the TRAM domain.

The protein belongs to the methylthiotransferase family. MiaB subfamily. Monomer. The cofactor is [4Fe-4S] cluster.

It localises to the cytoplasm. It carries out the reaction N(6)-dimethylallyladenosine(37) in tRNA + (sulfur carrier)-SH + AH2 + 2 S-adenosyl-L-methionine = 2-methylsulfanyl-N(6)-dimethylallyladenosine(37) in tRNA + (sulfur carrier)-H + 5'-deoxyadenosine + L-methionine + A + S-adenosyl-L-homocysteine + 2 H(+). In terms of biological role, catalyzes the methylthiolation of N6-(dimethylallyl)adenosine (i(6)A), leading to the formation of 2-methylthio-N6-(dimethylallyl)adenosine (ms(2)i(6)A) at position 37 in tRNAs that read codons beginning with uridine. The chain is tRNA-2-methylthio-N(6)-dimethylallyladenosine synthase from Helicobacter pylori (strain Shi470).